A 279-amino-acid polypeptide reads, in one-letter code: MTATLMDGRTLSRQLLESTAERVTGFHRSHGRRPCLATVLVGEDPASHTYVRIKVNRCTEVGIDSRRFDLPTLTTTEQLVRVLRDLSSDSAVDGILLQHPTPPQIDEHAAFEAIDPSKDVDGVTGTSFAAMAFGYRGFASCTPAAIMRLLDAYDVPLSGQRAVVVGRSAILGKPIGMLLLARDATVTYCHSRTTDLAAHVAEADLVVAAVGVPHLVRGEWIKPGAVVVDAGYNAGNVGDVQAATAANRASLITPVPGGVGPMTIAVLLAQTVDAAERHG.

NADP(+) contacts are provided by residues 166 to 168 (GRS) and Ser191.

The protein belongs to the tetrahydrofolate dehydrogenase/cyclohydrolase family. As to quaternary structure, homodimer.

The catalysed reaction is (6R)-5,10-methylene-5,6,7,8-tetrahydrofolate + NADP(+) = (6R)-5,10-methenyltetrahydrofolate + NADPH. It catalyses the reaction (6R)-5,10-methenyltetrahydrofolate + H2O = (6R)-10-formyltetrahydrofolate + H(+). The protein operates within one-carbon metabolism; tetrahydrofolate interconversion. Functionally, catalyzes the oxidation of 5,10-methylenetetrahydrofolate to 5,10-methenyltetrahydrofolate and then the hydrolysis of 5,10-methenyltetrahydrofolate to 10-formyltetrahydrofolate. The sequence is that of Bifunctional protein FolD 1 from Salinispora arenicola (strain CNS-205).